The sequence spans 332 residues: Anthranilate phosphoribosyltransferase (332 aa).

Residues Gly-79, 82 to 83 (GD), Ser-87, 89 to 92 (NIST), 107 to 115 (KHGNRSVSS), and Ser-119 each bind 5-phospho-alpha-D-ribose 1-diphosphate. Gly-79 contacts anthranilate. Mg(2+) is bound at residue Ser-91. Asn-110 is an anthranilate binding site. Residue Arg-165 participates in anthranilate binding. Residues Asp-223 and Glu-224 each coordinate Mg(2+).

The protein belongs to the anthranilate phosphoribosyltransferase family. Homodimer. The cofactor is Mg(2+).

The catalysed reaction is N-(5-phospho-beta-D-ribosyl)anthranilate + diphosphate = 5-phospho-alpha-D-ribose 1-diphosphate + anthranilate. It participates in amino-acid biosynthesis; L-tryptophan biosynthesis; L-tryptophan from chorismate: step 2/5. Its function is as follows. Catalyzes the transfer of the phosphoribosyl group of 5-phosphorylribose-1-pyrophosphate (PRPP) to anthranilate to yield N-(5'-phosphoribosyl)-anthranilate (PRA). The chain is Anthranilate phosphoribosyltransferase from Sodalis glossinidius (strain morsitans).